We begin with the raw amino-acid sequence, 70 residues long: U2-agatoxin-Ao1b (70 aa).

Residues 1-20 (MRAIISLILISAMVFSMIAA) form the signal peptide. A propeptide spanning residues 21–34 (VPEEEGLQLSEDER) is cleaved from the precursor. Intrachain disulfides connect cysteine 37/cysteine 53, cysteine 44/cysteine 58, and cysteine 52/cysteine 68. Leucine 69 carries the post-translational modification Leucine amide.

The protein belongs to the neurotoxin 01 (U2-agtx) family. Expressed by the venom gland.

The protein localises to the secreted. Functionally, insect active toxin causing rapid but reversible paralysis in crickets. No activity shown in mammals. Does not show effect on mammalian voltage-gated calcium channels. This is U2-agatoxin-Ao1b from Agelena orientalis (Funnel-web spider).